A 333-amino-acid chain; its full sequence is Autoinducer 2 import system permease protein LsrD (333 aa).

10 helical membrane passes run 7-27 (YGWE…FGLS), 45-65 (ICIG…GIDI), 67-87 (FGST…AGVP), 90-110 (VAIP…AGLI), 118-138 (LVIT…LSGL), 162-182 (LFGL…FWLL), 212-232 (TLCM…ILLV), 240-260 (SDLG…GGAN), 261-281 (IYGG…VGYL), and 288-308 (IGTP…LVVV).

It belongs to the binding-protein-dependent transport system permease family. AraH/RbsC subfamily. The complex is composed of two ATP-binding proteins (LsrA), two transmembrane proteins (LsrC and LsrD) and a solute-binding protein (LsrB).

It localises to the cell inner membrane. In terms of biological role, part of the ABC transporter complex LsrABCD involved in autoinducer 2 (AI-2) import. Probably responsible for the translocation of the substrate across the membrane. The sequence is that of Autoinducer 2 import system permease protein LsrD (lsrD) from Yersinia pseudotuberculosis serotype O:1b (strain IP 31758).